The primary structure comprises 249 residues: 2,3-bisphosphoglycerate-dependent phosphoglycerate mutase (249 aa).

Substrate is bound by residues 9-16, 22-23, Arg61, 88-91, Lys99, 115-116, and 184-185; these read RHGQSQWN, TG, ERHY, RR, and GN. His10 (tele-phosphohistidine intermediate) is an active-site residue. Catalysis depends on Glu88, which acts as the Proton donor/acceptor.

Belongs to the phosphoglycerate mutase family. BPG-dependent PGAM subfamily. Homodimer.

It carries out the reaction (2R)-2-phosphoglycerate = (2R)-3-phosphoglycerate. It functions in the pathway carbohydrate degradation; glycolysis; pyruvate from D-glyceraldehyde 3-phosphate: step 3/5. Functionally, catalyzes the interconversion of 2-phosphoglycerate and 3-phosphoglycerate. This is 2,3-bisphosphoglycerate-dependent phosphoglycerate mutase from Xanthomonas campestris pv. campestris (strain B100).